The following is a 282-amino-acid chain: Formamidopyrimidine-DNA glycosylase (282 aa).

Catalysis depends on P2, which acts as the Schiff-base intermediate with DNA. E3 serves as the catalytic Proton donor. K61 serves as the catalytic Proton donor; for beta-elimination activity. Residues H93, R112, and K158 each contribute to the DNA site. The FPG-type zinc finger occupies 244 to 278; that stretch reads DAYGREGEGCRRCGAVMHREKFMNRSSFYCPRCQP. R268 functions as the Proton donor; for delta-elimination activity in the catalytic mechanism.

It belongs to the FPG family. In terms of assembly, monomer. Zn(2+) is required as a cofactor.

It catalyses the reaction Hydrolysis of DNA containing ring-opened 7-methylguanine residues, releasing 2,6-diamino-4-hydroxy-5-(N-methyl)formamidopyrimidine.. The enzyme catalyses 2'-deoxyribonucleotide-(2'-deoxyribose 5'-phosphate)-2'-deoxyribonucleotide-DNA = a 3'-end 2'-deoxyribonucleotide-(2,3-dehydro-2,3-deoxyribose 5'-phosphate)-DNA + a 5'-end 5'-phospho-2'-deoxyribonucleoside-DNA + H(+). Its function is as follows. Involved in base excision repair of DNA damaged by oxidation or by mutagenic agents. Acts as a DNA glycosylase that recognizes and removes damaged bases. Has a preference for oxidized purines, such as 7,8-dihydro-8-oxoguanine (8-oxoG). Has AP (apurinic/apyrimidinic) lyase activity and introduces nicks in the DNA strand. Cleaves the DNA backbone by beta-delta elimination to generate a single-strand break at the site of the removed base with both 3'- and 5'-phosphates. This is Formamidopyrimidine-DNA glycosylase from Mycobacterium leprae (strain Br4923).